A 435-amino-acid polypeptide reads, in one-letter code: Legumain (435 aa).

The signal sequence occupies residues 1-17; that stretch reads MTWRVAVLLSLVLGAGA. Asparagine 93 carries N-linked (GlcNAc...) asparagine glycosylation. The active site involves histidine 150. Residue asparagine 169 is glycosylated (N-linked (GlcNAc...) asparagine). The Nucleophile role is filled by cysteine 191. N-linked (GlcNAc...) asparagine glycosylation is found at asparagine 215, asparagine 265, and asparagine 274. Positions 326 to 435 are excised as a propeptide; it reads NMKESQVLVG…AMDKVCLSHY (110 aa). Cystine bridges form between cysteine 380–cysteine 414 and cysteine 392–cysteine 431.

Belongs to the peptidase C13 family. In terms of assembly, homodimer before autocatalytic removal of the propeptide. Monomer after autocatalytic processing. May interact with integrins. In terms of processing, activated by autocatalytic processing at pH 4. Detected in kidney cortex (at protein level).

It localises to the lysosome. The enzyme catalyses Hydrolysis of proteins and small molecule substrates at -Asn-|-Xaa- bonds.. Has a strict specificity for hydrolysis of asparaginyl bonds. Can also cleave aspartyl bonds slowly, especially under acidic conditions. Involved in the processing of proteins for MHC class II antigen presentation in the lysosomal/endosomal system. Also involved in MHC class I antigen presentation in cross-presenting dendritic cells by mediating cleavage and maturation of Perforin-2 (MPEG1), thereby promoting antigen translocation in the cytosol. Required for normal lysosomal protein degradation in renal proximal tubules. Required for normal degradation of internalized EGFR. Plays a role in the regulation of cell proliferation via its role in EGFR degradation. The protein is Legumain (Lgmn) of Rattus norvegicus (Rat).